Reading from the N-terminus, the 397-residue chain is Elongation factor Tu (397 aa).

The tr-type G domain occupies 10–206 (KPHVNIGTIG…AIDSYIPTPE (197 aa)). A G1 region spans residues 19–26 (GHVDHGKT). Position 19-26 (19-26 (GHVDHGKT)) interacts with GTP. T26 is a binding site for Mg(2+). Residues 60–64 (GITIN) form a G2 region. A G3 region spans residues 81–84 (DCPG). GTP is bound by residues 81–85 (DCPGH) and 136–139 (NKAD). Residues 136-139 (NKAD) form a G4 region. Residues 174 to 176 (SAL) form a G5 region.

This sequence belongs to the TRAFAC class translation factor GTPase superfamily. Classic translation factor GTPase family. EF-Tu/EF-1A subfamily. Monomer.

It localises to the cytoplasm. The enzyme catalyses GTP + H2O = GDP + phosphate + H(+). GTP hydrolase that promotes the GTP-dependent binding of aminoacyl-tRNA to the A-site of ribosomes during protein biosynthesis. In Clostridium botulinum (strain ATCC 19397 / Type A), this protein is Elongation factor Tu.